Consider the following 352-residue polypeptide: MDDNKKKALAAALGQIERQFGKGAVMRMGDHDRQAIPAISTGSLGLDIALGIGGLPKGRIVEIYGPESSGKTTLTLSVIAQAQKMGATCAFVDAEHALDPEYAGKLGVNVDDLLVSQPDTGEQALEITDMLVRSNAIDVIVVDSVAALVPKAEIEGEMGDMHVGLQARLMSQALRKITGNIKNANCLVIFINQIRMKIGVMFGSPETTTGGNALKFYASVRLDIRRTGAVKEGDEVVGSETRVKVVKNKVAPPFRQAEFQILYGKGIYLNGEMIDLGVLHGFVEKSGAWYAYNGSKIGQGKANSAKFLADNPDIVATLEKQIRDKLLTPAPDVKAAANREPVEEVEEADTDI.

Position 65–72 (65–72 (GPESSGKT)) interacts with ATP. The disordered stretch occupies residues 333-352 (VKAAANREPVEEVEEADTDI). Positions 343–352 (EEVEEADTDI) are enriched in acidic residues.

This sequence belongs to the RecA family.

The protein resides in the cytoplasm. In terms of biological role, can catalyze the hydrolysis of ATP in the presence of single-stranded DNA, the ATP-dependent uptake of single-stranded DNA by duplex DNA, and the ATP-dependent hybridization of homologous single-stranded DNAs. It interacts with LexA causing its activation and leading to its autocatalytic cleavage. This chain is Protein RecA, found in Pseudomonas fluorescens.